We begin with the raw amino-acid sequence, 328 residues long: MARTVVLITGCSSGIGLHLAVRLASDPSQSFKVYATLRDLKTQGRLWEAARALACPPGSLETLQLDVRDSKSVAAARERVTEGRVDVLVCNAGLGLLGPLEALGEDAVASVLDVNVVGTVRMLQAFLPDMKRRGSGRVLVTGSVGGLMGLPFNDVYCASKFALEGLCESLAVLLLPFGVHLSLIECGPVHTAFMEKVLGSPEEVLDRTDIHTFHRFYQYLAHSKQVFREAAQNPEEVAEVFLTALRAPKPTLRYFTTERFLPLLRMRLDDPSGSNYVTAMHREVFGDVPAKAEAGAEAGGGAGPGAEDEAGRGAVGDPELGDPPAAPQ.

NADP(+)-binding positions include 10 to 38 and Asp66; that span reads GCSS…ATLR. Ser135 is modified (phosphoserine; by PKA). Ser143 provides a ligand contact to substrate. The active-site Proton acceptor is Tyr156. Position 160 (Lys160) interacts with NADP(+). The tract at residues 291-328 is disordered; sequence KAEAGAEAGGGAGPGAEDEAGRGAVGDPELGDPPAAPQ.

The protein belongs to the short-chain dehydrogenases/reductases (SDR) family. Homodimer. Exists predominantly as a homodimer but also exits as monomer.

The protein resides in the cytoplasm. It carries out the reaction 17beta-estradiol + NAD(+) = estrone + NADH + H(+). The enzyme catalyses 17beta-estradiol + NADP(+) = estrone + NADPH + H(+). The catalysed reaction is testosterone + NADP(+) = androst-4-ene-3,17-dione + NADPH + H(+). Its pathway is steroid biosynthesis; estrogen biosynthesis. Its function is as follows. Favors the reduction of estrogens and androgens. Converts estrone (E1) to a more potent estrogen, 17beta-estradiol (E2). Also has 20-alpha-HSD activity. Uses preferentially NADH. The chain is 17-beta-hydroxysteroid dehydrogenase type 1 from Homo sapiens (Human).